A 156-amino-acid polypeptide reads, in one-letter code: Glutamate-rich protein 2 (156 aa).

Disordered regions lie at residues 29-66 (LQDIDDKLSESAEDDGEDDTNDEDDDEDSNPKKNTQAP) and 116-156 (EKTQ…EDGS). 2 stretches are compositionally biased toward acidic residues: residues 39-56 (SAEDDGEDDTNDEDDDED) and 140-156 (SDEELSDESSDEGEDGS).

The protein is Glutamate-rich protein 2 (ERICH2) of Homo sapiens (Human).